We begin with the raw amino-acid sequence, 104 residues long: Large ribosomal subunit protein cL38 (104 aa).

The N-terminal 39 residues, M1–E39, are a transit peptide targeting the chloroplast. Residues S42 to P76 form a disordered region. Over residues P44–S60 the composition is skewed to basic residues.

The protein belongs to the chloroplast-specific ribosomal protein cL38 family. Part of the 50S ribosomal subunit.

It is found in the plastid. The protein localises to the chloroplast. The polypeptide is Large ribosomal subunit protein cL38 (PSRP6) (Pisum sativum (Garden pea)).